A 475-amino-acid polypeptide reads, in one-letter code: Ribulose bisphosphate carboxylase large chain (475 aa).

A propeptide spanning residues 1–2 (MS) is cleaved from the precursor. Pro-3 carries the N-acetylproline modification. 3 residues coordinate substrate: Thr-65, Asn-123, and Thr-173. The active-site Proton acceptor is Lys-175. Substrate is bound at residue Lys-177. Positions 201, 203, and 204 each coordinate Mg(2+). Lys-201 is modified (N6-carboxylysine). Positions 204, 294, 295, 327, 334, 379, 381, 403, and 404 each coordinate substrate. His-294 (proton acceptor) is an active-site residue.

Belongs to the RuBisCO large chain family. Type I subfamily. In terms of assembly, heterohexadecamer of 8 large chains and 8 small chains. The cofactor is Mg(2+). In terms of processing, the disulfide bond which can form between Cys-247 in the large chain dimeric partners within the hexadecamer appears to be associated with oxidative stress and protein turnover. The disulfide bonds reported in 1RBO may be the result of oxidation during crystallization.

It localises to the plastid. The protein resides in the chloroplast. The enzyme catalyses 2 (2R)-3-phosphoglycerate + 2 H(+) = D-ribulose 1,5-bisphosphate + CO2 + H2O. It carries out the reaction D-ribulose 1,5-bisphosphate + O2 = 2-phosphoglycolate + (2R)-3-phosphoglycerate + 2 H(+). With respect to regulation, abscisic acid (ABA) causes weak inhibition of RuBisCO catalytic activity, but more potent inhibition of RuBisCO activation. RuBisCO catalyzes two reactions: the carboxylation of D-ribulose 1,5-bisphosphate, the primary event in carbon dioxide fixation, as well as the oxidative fragmentation of the pentose substrate in the photorespiration process. Both reactions occur simultaneously and in competition at the same active site. Binds to abscisic acid (ABA) which has weakly inhibits carboxylation and more strongly inhibits enzyme activation. The polypeptide is Ribulose bisphosphate carboxylase large chain (Spinacia oleracea (Spinach)).